The following is a 421-amino-acid chain: MRFETLQLHAGYEPEPTTLSRQVPIYPTTSYVFKSPEHAANLFALKEFGNIYSRIMNPTVDVLEKRLAALEGGKAALATASGHAAQFLALTTLAQAGDNIVSTPNLYGGTFNQFKVTLKRLGIEVRFTSREERPEEFLALTDEKTRAWWVESIGNPALNIPDLEALAQAAREKGVALIVDNTFGMGGYLLRPLAWGAALVTHSLTKWVGGHGAVIAGAIVDGGNFPWEGGRYPLLTEPQPGYHGLRLTEAFGELAFIVKARVDGLRDQGQALGPFEAWVVLLGMETLSLRAERHVENTLHLAHWLLEQPQVAWVNYPGLPHHPHHDRAQKYFKGKPGAVLTFGLKGGYEAAKRFISRLKLISHLANVGDTRTLAIHPASTTHSQLSPEEQAQAGVSPEMVRLSVGLEHVEDLKAELKEALA.

At lysine 206 the chain carries N6-(pyridoxal phosphate)lysine.

It belongs to the trans-sulfuration enzymes family. In terms of assembly, homotetramer. Requires pyridoxal 5'-phosphate as cofactor.

It catalyses the reaction O-acetyl-L-homoserine + hydrogen sulfide = L-homocysteine + acetate. Its pathway is amino-acid biosynthesis; L-methionine biosynthesis via de novo pathway; L-homocysteine from O-acetyl-L-homoserine: step 1/1. Inhibited by the carbonyl reagents hydroxylamine and phenylhydrazine. Also inhibited by methionine and propargylglycine. Catalyzes the conversion of O-acetyl-L-homoserine (OAH) into homocysteine in the methionine biosynthesis pathway. Has weak activity with O-acetyl-L-serine, O-phospho-L-serine, L-serine, O-succinyl-L-homoserine and L-homoserine. Shows low CTT beta-lyase activity and very low CTT gamma-synthase activity. The sequence is that of O-acetyl-L-homoserine sulfhydrylase 1 from Thermus thermophilus (strain ATCC 27634 / DSM 579 / HB8).